A 475-amino-acid chain; its full sequence is Aspartyl/glutamyl-tRNA(Asn/Gln) amidotransferase subunit B (475 aa).

This sequence belongs to the GatB/GatE family. GatB subfamily. Heterotrimer of A, B and C subunits.

It carries out the reaction L-glutamyl-tRNA(Gln) + L-glutamine + ATP + H2O = L-glutaminyl-tRNA(Gln) + L-glutamate + ADP + phosphate + H(+). It catalyses the reaction L-aspartyl-tRNA(Asn) + L-glutamine + ATP + H2O = L-asparaginyl-tRNA(Asn) + L-glutamate + ADP + phosphate + 2 H(+). Functionally, allows the formation of correctly charged Asn-tRNA(Asn) or Gln-tRNA(Gln) through the transamidation of misacylated Asp-tRNA(Asn) or Glu-tRNA(Gln) in organisms which lack either or both of asparaginyl-tRNA or glutaminyl-tRNA synthetases. The reaction takes place in the presence of glutamine and ATP through an activated phospho-Asp-tRNA(Asn) or phospho-Glu-tRNA(Gln). This chain is Aspartyl/glutamyl-tRNA(Asn/Gln) amidotransferase subunit B, found in Bacillus cereus (strain ATCC 10987 / NRS 248).